The chain runs to 322 residues: Methionyl-tRNA formyltransferase (322 aa).

Residue 115 to 118 (SLLP) coordinates (6S)-5,6,7,8-tetrahydrofolate.

The protein belongs to the Fmt family.

The catalysed reaction is L-methionyl-tRNA(fMet) + (6R)-10-formyltetrahydrofolate = N-formyl-L-methionyl-tRNA(fMet) + (6S)-5,6,7,8-tetrahydrofolate + H(+). In terms of biological role, attaches a formyl group to the free amino group of methionyl-tRNA(fMet). The formyl group appears to play a dual role in the initiator identity of N-formylmethionyl-tRNA by promoting its recognition by IF2 and preventing the misappropriation of this tRNA by the elongation apparatus. The chain is Methionyl-tRNA formyltransferase from Treponema denticola (strain ATCC 35405 / DSM 14222 / CIP 103919 / JCM 8153 / KCTC 15104).